The primary structure comprises 730 residues: LisH domain-containing protein ARMC9 (730 aa).

Positions 7 to 39 constitute a LisH domain; it reads HESELLGLVKEYLDFAEFEDTLKTFSKECKVKG. The stretch at 205–242 forms a coiled coil; sequence SNNKEMLQQLHQQLLEAERRAMAYLKRYNKMQADYHSL. S583 bears the Phosphoserine mark. Positions 675–730 are disordered; sequence QNAQQARNGCPRPIPVAQPDDYKEGKRGVAGRATPSSCKSAECAEPVLSSGAQKPK.

In terms of assembly, interacts with TOGARAM1, CCDC66, CEP104, CSPP1 and CEP290. Interacts with NDUFAF2.

It localises to the cytoplasm. It is found in the cytoskeleton. The protein resides in the cilium basal body. The protein localises to the cell projection. Its subcellular location is the cilium. It localises to the microtubule organizing center. It is found in the centrosome. The protein resides in the centriole. Its function is as follows. Involved in ciliogenesis. It is required for appropriate acetylation and polyglutamylation of ciliary microtubules, and regulation of cilium length. Acts as a positive regulator of hedgehog (Hh)signaling. May participate in the trafficking and/or retention of GLI2 and GLI3 proteins at the ciliary tip. This chain is LisH domain-containing protein ARMC9 (Armc9), found in Rattus norvegicus (Rat).